The chain runs to 182 residues: MTFVPSKIFFTKGVGRHREYLSSFELALRDAKIEKCNLVTVSSIYPPSCKRISIEEGLKHLSPGQITFCVMARNSTNERNRLIASSIGVALPADASQYGYLSEHHPYGETAEYAGEYAEDLAATMLATTLGIEFDSNTAWDEREEVYKMSGKIVKSFNVTQSAEGDKNGLWTTVISAAILLP.

Pyruvic acid (Ser) is present on Ser43.

This sequence belongs to the PdaD family. Pyruvate is required as a cofactor.

The enzyme catalyses L-arginine + H(+) = agmatine + CO2. This is Probable pyruvoyl-dependent arginine decarboxylase from Chloroherpeton thalassium (strain ATCC 35110 / GB-78).